A 361-amino-acid chain; its full sequence is Peptide chain release factor 1 (361 aa).

Glutamine 235 carries the N5-methylglutamine modification.

The protein belongs to the prokaryotic/mitochondrial release factor family. In terms of processing, methylated by PrmC. Methylation increases the termination efficiency of RF1.

It localises to the cytoplasm. In terms of biological role, peptide chain release factor 1 directs the termination of translation in response to the peptide chain termination codons UAG and UAA. The protein is Peptide chain release factor 1 of Chlamydia felis (strain Fe/C-56) (Chlamydophila felis).